Consider the following 100-residue polypeptide: Aspartyl/glutamyl-tRNA(Asn/Gln) amidotransferase subunit C (100 aa).

The protein belongs to the GatC family. In terms of assembly, heterotrimer of A, B and C subunits.

It catalyses the reaction L-glutamyl-tRNA(Gln) + L-glutamine + ATP + H2O = L-glutaminyl-tRNA(Gln) + L-glutamate + ADP + phosphate + H(+). It carries out the reaction L-aspartyl-tRNA(Asn) + L-glutamine + ATP + H2O = L-asparaginyl-tRNA(Asn) + L-glutamate + ADP + phosphate + 2 H(+). Allows the formation of correctly charged Asn-tRNA(Asn) or Gln-tRNA(Gln) through the transamidation of misacylated Asp-tRNA(Asn) or Glu-tRNA(Gln) in organisms which lack either or both of asparaginyl-tRNA or glutaminyl-tRNA synthetases. The reaction takes place in the presence of glutamine and ATP through an activated phospho-Asp-tRNA(Asn) or phospho-Glu-tRNA(Gln). The chain is Aspartyl/glutamyl-tRNA(Asn/Gln) amidotransferase subunit C from Corynebacterium aurimucosum (strain ATCC 700975 / DSM 44827 / CIP 107346 / CN-1) (Corynebacterium nigricans).